A 583-amino-acid chain; its full sequence is Aspartate--tRNA ligase (583 aa).

E169 serves as a coordination point for L-aspartate. Residues 193–196 (QLFK) are aspartate. R215 lines the L-aspartate pocket. ATP-binding positions include 215-217 (RDE) and Q224. H443 is an L-aspartate binding site. E477 contacts ATP. R484 serves as a coordination point for L-aspartate. 529-532 (GIDR) is an ATP binding site.

This sequence belongs to the class-II aminoacyl-tRNA synthetase family. Type 1 subfamily. As to quaternary structure, homodimer.

Its subcellular location is the cytoplasm. The catalysed reaction is tRNA(Asp) + L-aspartate + ATP = L-aspartyl-tRNA(Asp) + AMP + diphosphate. Its function is as follows. Catalyzes the attachment of L-aspartate to tRNA(Asp) in a two-step reaction: L-aspartate is first activated by ATP to form Asp-AMP and then transferred to the acceptor end of tRNA(Asp). The protein is Aspartate--tRNA ligase of Stenotrophomonas maltophilia (strain K279a).